We begin with the raw amino-acid sequence, 170 residues long: Ubiquinone/menaquinone biosynthesis C-methyltransferase UbiE (170 aa).

The span at 1–12 (MNDQRKGDHAEP) shows a compositional bias: basic and acidic residues. The segment at 1–22 (MNDQRKGDHAEPTTHFGYQDVP) is disordered.

This sequence belongs to the class I-like SAM-binding methyltransferase superfamily. MenG/UbiE family.

The enzyme catalyses a 2-demethylmenaquinol + S-adenosyl-L-methionine = a menaquinol + S-adenosyl-L-homocysteine + H(+). It catalyses the reaction a 2-methoxy-6-(all-trans-polyprenyl)benzene-1,4-diol + S-adenosyl-L-methionine = a 5-methoxy-2-methyl-3-(all-trans-polyprenyl)benzene-1,4-diol + S-adenosyl-L-homocysteine + H(+). It participates in quinol/quinone metabolism; menaquinone biosynthesis; menaquinol from 1,4-dihydroxy-2-naphthoate: step 2/2. Its pathway is cofactor biosynthesis; ubiquinone biosynthesis. Methyltransferase required for the conversion of demethylmenaquinol (DMKH2) to menaquinol (MKH2) and the conversion of 2-polyprenyl-6-methoxy-1,4-benzoquinol (DDMQH2) to 2-polyprenyl-3-methyl-6-methoxy-1,4-benzoquinol (DMQH2). The polypeptide is Ubiquinone/menaquinone biosynthesis C-methyltransferase UbiE (ubiE) (Ectopseudomonas oleovorans (Pseudomonas oleovorans)).